Consider the following 381-residue polypeptide: tRNA-cytidine(32) 2-sulfurtransferase (381 aa).

The PP-loop motif motif lies at 101–106 (SGGKDS). [4Fe-4S] cluster contacts are provided by cysteine 176, cysteine 179, and cysteine 267.

The protein belongs to the TtcA family. In terms of assembly, homodimer. It depends on Mg(2+) as a cofactor. The cofactor is [4Fe-4S] cluster.

It localises to the cytoplasm. It carries out the reaction cytidine(32) in tRNA + S-sulfanyl-L-cysteinyl-[cysteine desulfurase] + AH2 + ATP = 2-thiocytidine(32) in tRNA + L-cysteinyl-[cysteine desulfurase] + A + AMP + diphosphate + H(+). It participates in tRNA modification. Its function is as follows. Catalyzes the ATP-dependent 2-thiolation of cytidine in position 32 of tRNA, to form 2-thiocytidine (s(2)C32). The sulfur atoms are provided by the cysteine/cysteine desulfurase (IscS) system. In Psychrobacter cryohalolentis (strain ATCC BAA-1226 / DSM 17306 / VKM B-2378 / K5), this protein is tRNA-cytidine(32) 2-sulfurtransferase.